The chain runs to 108 residues: Nucleoid-associated protein Bmul_1447/BMULJ_01796 (108 aa).

Residues 84-108 are disordered; the sequence is EATSQEKMSGMTSGLPLPPGFKLPF. Positions 85–95 are enriched in polar residues; it reads ATSQEKMSGMT. The segment covering 99–108 has biased composition (pro residues); sequence PLPPGFKLPF.

This sequence belongs to the YbaB/EbfC family. In terms of assembly, homodimer.

It localises to the cytoplasm. The protein localises to the nucleoid. In terms of biological role, binds to DNA and alters its conformation. May be involved in regulation of gene expression, nucleoid organization and DNA protection. In Burkholderia multivorans (strain ATCC 17616 / 249), this protein is Nucleoid-associated protein Bmul_1447/BMULJ_01796.